A 201-amino-acid chain; its full sequence is 3-isopropylmalate dehydratase small subunit (201 aa).

The protein belongs to the LeuD family. LeuD type 1 subfamily. In terms of assembly, heterodimer of LeuC and LeuD.

It carries out the reaction (2R,3S)-3-isopropylmalate = (2S)-2-isopropylmalate. The protein operates within amino-acid biosynthesis; L-leucine biosynthesis; L-leucine from 3-methyl-2-oxobutanoate: step 2/4. Functionally, catalyzes the isomerization between 2-isopropylmalate and 3-isopropylmalate, via the formation of 2-isopropylmaleate. This is 3-isopropylmalate dehydratase small subunit from Shewanella sp. (strain MR-7).